A 121-amino-acid chain; its full sequence is Protein AC4 (121 aa).

The tract at residues 11 to 30 (RGQSSNPHTSESQERNIQTG) is disordered. Residues 12–30 (GQSSNPHTSESQERNIQTG) are compositionally biased toward polar residues.

It belongs to the geminiviridae protein AC4/C4 family.

Pathogenicity determinant. May act as a suppressor of RNA-mediated gene silencing, also known as post-transcriptional gene silencing (PTGS), a mechanism of plant viral defense that limits the accumulation of viral RNAs. This Cabbage leaf curl virus (isolate Jamaica) (CaLCuV) protein is Protein AC4.